A 309-amino-acid polypeptide reads, in one-letter code: Homoserine O-succinyltransferase (309 aa).

Residue Cys142 is the Acyl-thioester intermediate of the active site. 2 residues coordinate substrate: Lys163 and Ser192. Residue His235 is the Proton acceptor of the active site. Residue Glu237 is part of the active site. Arg249 contacts substrate.

This sequence belongs to the MetA family.

The protein localises to the cytoplasm. The catalysed reaction is L-homoserine + succinyl-CoA = O-succinyl-L-homoserine + CoA. Its pathway is amino-acid biosynthesis; L-methionine biosynthesis via de novo pathway; O-succinyl-L-homoserine from L-homoserine: step 1/1. Transfers a succinyl group from succinyl-CoA to L-homoserine, forming succinyl-L-homoserine. In Cronobacter sakazakii (strain ATCC BAA-894) (Enterobacter sakazakii), this protein is Homoserine O-succinyltransferase.